The following is a 149-amino-acid chain: Calmodulin (149 aa).

A2 carries the post-translational modification N-acetylalanine. EF-hand domains are found at residues 8 to 43, 44 to 79, 81 to 116, and 117 to 149; these read EQIA…VGQN, PTEA…KMKD, DSEE…LGEK, and LTDE…MMSK. 19 residues coordinate Ca(2+): D21, D23, D25, T27, E32, D57, D59, N61, T63, E68, D94, D96, N98, E105, D130, D132, D134, Q136, and E141.

Belongs to the calmodulin family.

Its function is as follows. Calmodulin mediates the control of a large number of enzymes, ion channels and other proteins by Ca(2+). Among the enzymes to be stimulated by the calmodulin-Ca(2+) complex are a number of protein kinases and phosphatases. The sequence is that of Calmodulin (CMD1) from Achlya klebsiana.